Here is a 503-residue protein sequence, read N- to C-terminus: Cobyric acid synthase (503 aa).

Residues D245–L447 form the GATase cobBQ-type domain. Catalysis depends on C326, which acts as the Nucleophile. Residue H439 is part of the active site.

This sequence belongs to the CobB/CobQ family. CobQ subfamily.

The protein operates within cofactor biosynthesis; adenosylcobalamin biosynthesis. Functionally, catalyzes amidations at positions B, D, E, and G on adenosylcobyrinic A,C-diamide. NH(2) groups are provided by glutamine, and one molecule of ATP is hydrogenolyzed for each amidation. In Alkaliphilus metalliredigens (strain QYMF), this protein is Cobyric acid synthase.